The following is a 366-amino-acid chain: N-methyltransferase fsqC (366 aa).

The signal sequence occupies residues 1-18 (MSSNVQDIRGWPPPFANA). Asn-270 is a glycosylation site (N-linked (GlcNAc...) asparagine).

This sequence belongs to the methyltransferase superfamily.

Its pathway is secondary metabolite biosynthesis. Functionally, N-methyltransferase; part of the gene cluster that mediates the biosynthesis of the isoquinoline alkaloids fumisoquin A, fumisoquin B and fumisoquin C; as well as small amounts of fumipyrrole as a shunt metabolite. The products of the cluster lead to a brown coloration and are important for growth and conidiation. The nonribosomal peptide synthetase-like protein fsqF, which lacks a canonical condensation domain, is required for addition of a serine-derived dehydroalanine moiety to activated tyrosine but is not essential for the subsequent steps leading to isoquinoline formation. A different enzyme, most likely the ATP-grasp enzyme fsqD, is responsible for activation of tyrosine. Three additional enzymes encoded by the fsq cluster, the N-methyltransferase fsqC, the phenol 2-monooxygenase fsqG and the FAD-dependent oxidase fsqB, catalyze the formation of the isoquinoline ring system in the fumisoquins. FsqB converts the fspF thiolation domain-bound (2S,4S,5S)-2-amino-6-(3,4-dihydroxyphenyl)-4-hydroxy-5-(methylamino)hexanoyl into isoquinoline. The cyclization most likely proceeds via a two-step mechanism, beginning with FAD-dependent oxidation of the methyl group to an iminium species followed by electrophilic attack on the deprotonated phenol. This chain is N-methyltransferase fsqC, found in Aspergillus fumigatus (strain ATCC MYA-4609 / CBS 101355 / FGSC A1100 / Af293) (Neosartorya fumigata).